A 635-amino-acid chain; its full sequence is 1-deoxy-D-xylulose-5-phosphate synthase (635 aa).

Thiamine diphosphate-binding positions include His72 and 113-115 (GHA). Position 144 (Asp144) interacts with Mg(2+). Residues 145–146 (GA), Asn174, Tyr287, and Glu370 each bind thiamine diphosphate. Residue Asn174 coordinates Mg(2+).

This sequence belongs to the transketolase family. DXPS subfamily. In terms of assembly, homodimer. Mg(2+) serves as cofactor. Thiamine diphosphate is required as a cofactor.

The catalysed reaction is D-glyceraldehyde 3-phosphate + pyruvate + H(+) = 1-deoxy-D-xylulose 5-phosphate + CO2. The protein operates within metabolic intermediate biosynthesis; 1-deoxy-D-xylulose 5-phosphate biosynthesis; 1-deoxy-D-xylulose 5-phosphate from D-glyceraldehyde 3-phosphate and pyruvate: step 1/1. Functionally, catalyzes the acyloin condensation reaction between C atoms 2 and 3 of pyruvate and glyceraldehyde 3-phosphate to yield 1-deoxy-D-xylulose-5-phosphate (DXP). In Trichormus variabilis (strain ATCC 29413 / PCC 7937) (Anabaena variabilis), this protein is 1-deoxy-D-xylulose-5-phosphate synthase.